We begin with the raw amino-acid sequence, 177 residues long: uncharacterized protein (177 aa).

A disordered region spans residues 122–177; the sequence is LPFTRNGSGQQSNKLRDPKKGRTHKPKPSEKHKKNKTGKKGAQEKTHRSRSSRKGN. Composition is skewed to basic residues over residues 142–160 and 168–177; these read GRTH…KTGK and HRSRSSRKGN.

This is an uncharacterized protein from Saccharomyces cerevisiae (strain ATCC 204508 / S288c) (Baker's yeast).